The sequence spans 225 residues: Phosphoribosylformylglycinamidine synthase subunit PurQ (225 aa).

One can recognise a Glutamine amidotransferase type-1 domain in the interval Arg-5 to Gly-225. Cys-89 serves as the catalytic Nucleophile. Active-site residues include His-198 and Glu-200.

As to quaternary structure, part of the FGAM synthase complex composed of 1 PurL, 1 PurQ and 2 PurS subunits.

The protein localises to the cytoplasm. The enzyme catalyses N(2)-formyl-N(1)-(5-phospho-beta-D-ribosyl)glycinamide + L-glutamine + ATP + H2O = 2-formamido-N(1)-(5-O-phospho-beta-D-ribosyl)acetamidine + L-glutamate + ADP + phosphate + H(+). It catalyses the reaction L-glutamine + H2O = L-glutamate + NH4(+). The protein operates within purine metabolism; IMP biosynthesis via de novo pathway; 5-amino-1-(5-phospho-D-ribosyl)imidazole from N(2)-formyl-N(1)-(5-phospho-D-ribosyl)glycinamide: step 1/2. In terms of biological role, part of the phosphoribosylformylglycinamidine synthase complex involved in the purines biosynthetic pathway. Catalyzes the ATP-dependent conversion of formylglycinamide ribonucleotide (FGAR) and glutamine to yield formylglycinamidine ribonucleotide (FGAM) and glutamate. The FGAM synthase complex is composed of three subunits. PurQ produces an ammonia molecule by converting glutamine to glutamate. PurL transfers the ammonia molecule to FGAR to form FGAM in an ATP-dependent manner. PurS interacts with PurQ and PurL and is thought to assist in the transfer of the ammonia molecule from PurQ to PurL. The polypeptide is Phosphoribosylformylglycinamidine synthase subunit PurQ (Synechococcus sp. (strain JA-3-3Ab) (Cyanobacteria bacterium Yellowstone A-Prime)).